The chain runs to 661 residues: Pentatricopeptide repeat-containing protein At3g04750, mitochondrial (661 aa).

A mitochondrion-targeting transit peptide spans 1–18 (MCFVLLLRRGFRLFGTEC). PPR repeat units follow at residues 99–131 (NVFV…RVSP), 132–163 (DRQT…GCLS), 165–195 (GNYL…MPHP), 196–230 (DVSS…GIEP), 231–265 (DEYT…GPVY), 268–298 (NLIL…MKKK), 299–333 (DMRS…DLVS), 334–366 (WNSL…KVKP), 367–401 (DRVT…QLKG), 402–432 (DAFL…ATEK), 433–467 (DVAL…GVTP), 468–498 (NNVT…MKDK), and 504–539 (ETEH…PSQS). The segment at 540 to 615 (MWGSILSACR…TAGYSSVVGV (76 aa)) is type E motif. The tract at residues 616-647 (EGLHRFVAAEKQNHPRWTEIKRILQHLYNEMK) is type E(+) motif.

The protein belongs to the PPR family. PCMP-E subfamily.

Its subcellular location is the mitochondrion. The chain is Pentatricopeptide repeat-containing protein At3g04750, mitochondrial (PCMP-E81) from Arabidopsis thaliana (Mouse-ear cress).